The chain runs to 365 residues: UDP-N-acetylglucosamine--N-acetylmuramyl-(pentapeptide) pyrophosphoryl-undecaprenol N-acetylglucosamine transferase (365 aa).

UDP-N-acetyl-alpha-D-glucosamine contacts are provided by residues Thr-17–Gly-19, Asn-129, Arg-167, Ser-194, Ile-250, Ala-269–Glu-274, and Gln-295.

This sequence belongs to the glycosyltransferase 28 family. MurG subfamily.

The protein resides in the cell inner membrane. The enzyme catalyses di-trans,octa-cis-undecaprenyl diphospho-N-acetyl-alpha-D-muramoyl-L-alanyl-D-glutamyl-meso-2,6-diaminopimeloyl-D-alanyl-D-alanine + UDP-N-acetyl-alpha-D-glucosamine = di-trans,octa-cis-undecaprenyl diphospho-[N-acetyl-alpha-D-glucosaminyl-(1-&gt;4)]-N-acetyl-alpha-D-muramoyl-L-alanyl-D-glutamyl-meso-2,6-diaminopimeloyl-D-alanyl-D-alanine + UDP + H(+). It functions in the pathway cell wall biogenesis; peptidoglycan biosynthesis. Its function is as follows. Cell wall formation. Catalyzes the transfer of a GlcNAc subunit on undecaprenyl-pyrophosphoryl-MurNAc-pentapeptide (lipid intermediate I) to form undecaprenyl-pyrophosphoryl-MurNAc-(pentapeptide)GlcNAc (lipid intermediate II). The sequence is that of UDP-N-acetylglucosamine--N-acetylmuramyl-(pentapeptide) pyrophosphoryl-undecaprenol N-acetylglucosamine transferase from Shewanella woodyi (strain ATCC 51908 / MS32).